The sequence spans 129 residues: Cytochrome c oxidase subunit 5B, mitochondrial (129 aa).

Residues 1–31 constitute a mitochondrion transit peptide; it reads MASRLLRGVGALASQALRARGPNGVSVVRSM. An N6-acetyllysine mark is found at lysine 68 and lysine 86. Positions 91, 93, 113, and 116 each coordinate Zn(2+). Lysine 121 is subject to N6-acetyllysine.

It belongs to the cytochrome c oxidase subunit 5B family. In terms of assembly, component of the cytochrome c oxidase (complex IV, CIV), a multisubunit enzyme composed of 14 subunits. The complex is composed of a catalytic core of 3 subunits MT-CO1, MT-CO2 and MT-CO3, encoded in the mitochondrial DNA, and 11 supernumerary subunits COX4I1 (or COX4I2), COX5A, COX5B, COX6A2 (or COX6A1), COX6B1 (or COX6B2), COX6C, COX7A1 (or COX7A2), COX7B, COX7C, COX8B and NDUFA4, which are encoded in the nuclear genome. The complex exists as a monomer or a dimer and forms supercomplexes (SCs) in the inner mitochondrial membrane with NADH-ubiquinone oxidoreductase (complex I, CI) and ubiquinol-cytochrome c oxidoreductase (cytochrome b-c1 complex, complex III, CIII), resulting in different assemblies (supercomplex SCI(1)III(2)IV(1) and megacomplex MCI(2)III(2)IV(2)).

It localises to the mitochondrion inner membrane. The protein operates within energy metabolism; oxidative phosphorylation. Functionally, component of the cytochrome c oxidase, the last enzyme in the mitochondrial electron transport chain which drives oxidative phosphorylation. The respiratory chain contains 3 multisubunit complexes succinate dehydrogenase (complex II, CII), ubiquinol-cytochrome c oxidoreductase (cytochrome b-c1 complex, complex III, CIII) and cytochrome c oxidase (complex IV, CIV), that cooperate to transfer electrons derived from NADH and succinate to molecular oxygen, creating an electrochemical gradient over the inner membrane that drives transmembrane transport and the ATP synthase. Cytochrome c oxidase is the component of the respiratory chain that catalyzes the reduction of oxygen to water. Electrons originating from reduced cytochrome c in the intermembrane space (IMS) are transferred via the dinuclear copper A center (CU(A)) of subunit 2 and heme A of subunit 1 to the active site in subunit 1, a binuclear center (BNC) formed by heme A3 and copper B (CU(B)). The BNC reduces molecular oxygen to 2 water molecules using 4 electrons from cytochrome c in the IMS and 4 protons from the mitochondrial matrix. The sequence is that of Cytochrome c oxidase subunit 5B, mitochondrial (COX5B) from Bos taurus (Bovine).